A 196-amino-acid chain; its full sequence is Peroxiredoxin TSA1 (196 aa).

In terms of domain architecture, Thioredoxin spans 3–161 (AQVQKQAPTF…ALRLVEAFQW (159 aa)). Lys14 is covalently cross-linked (Glycyl lysine isopeptide (Lys-Gly) (interchain with G-Cter in ubiquitin)). 45–47 (TFV) contributes to the substrate binding site. Residue Cys48 is the Cysteine sulfenic acid (-SOH) intermediate of the active site. Residue Lys89 forms a Glycyl lysine isopeptide (Lys-Gly) (interchain with G-Cter in ubiquitin) linkage. Substrate is bound at residue Arg124. Lys132 is covalently cross-linked (Glycyl lysine isopeptide (Lys-Gly) (interchain with G-Cter in ubiquitin)). At Thr174 the chain carries Phosphothreonine.

It belongs to the peroxiredoxin family. AhpC/Prx1 subfamily. As to quaternary structure, homodimer; disulfide-linked, upon oxidation. Interacts with YAP1 via transient disulfide linkages. Post-translationally, the enzyme can be inactivated by further oxidation of the cysteine sulfenic acid (C(P)-SOH) to sulphinic acid (C(P)-SO2H) instead of its condensation to a disulfide bond. It can be reactivated by forming a transient disulfide bond with sulfiredoxin SRX1, which reduces the cysteine sulfinic acid in an ATP- and Mg-dependent manner.

The protein resides in the cytoplasm. It catalyses the reaction a hydroperoxide + [thioredoxin]-dithiol = an alcohol + [thioredoxin]-disulfide + H2O. In terms of biological role, thiol-specific peroxidase that catalyzes the reduction of hydrogen peroxide and organic hydroperoxides to water and alcohols, respectively. Plays a role in cell protection against oxidative stress by detoxifying peroxides and as sensor of hydrogen peroxide-mediated signaling events. Protects the cell against the oxidative stress caused by nascent-protein misfolding and aggregation. Relays hydrogen peroxide as a signal to the transcription factor YAP1 by inducing the formation of intramolecular disulfide bonds in YAP1, which causes its nuclear accumulation and activation. Can act alternatively as peroxidase and molecular chaperone. Oxidative stress and heat shock exposure cause a reversible shift of the protein structure from low MW species to high MW complexes, triggering a peroxidase-to-chaperone functional switch. The chaperone function of the protein enhances resistance to heat shock. The polypeptide is Peroxiredoxin TSA1 (Saccharomyces cerevisiae (strain ATCC 204508 / S288c) (Baker's yeast)).